Here is a 749-residue protein sequence, read N- to C-terminus: Catalase-peroxidase (749 aa).

The span at 1 to 12 (MSSDTSDTRPPH) shows a compositional bias: basic and acidic residues. A disordered region spans residues 1–40 (MSSDTSDTRPPHSDSGTQSNSESENPIIDSPEPKAHAPLT). Residues 14–24 (DSGTQSNSESE) show a composition bias toward polar residues. The segment at residues 113–240 (WHAAGTYRIF…FGATTMGLIY (128 aa)) is a cross-link (tryptophyl-tyrosyl-methioninium (Trp-Tyr) (with M-266)). H114 acts as the Proton acceptor in catalysis. Positions 240–266 (YVNPEGPEGKPDPLAAAHDIRETFGRM) form a cross-link, tryptophyl-tyrosyl-methioninium (Tyr-Met) (with W-113). Residue H281 participates in heme b binding.

It belongs to the peroxidase family. Peroxidase/catalase subfamily. In terms of assembly, homodimer or homotetramer. The cofactor is heme b. In terms of processing, formation of the three residue Trp-Tyr-Met cross-link is important for the catalase, but not the peroxidase activity of the enzyme.

It carries out the reaction H2O2 + AH2 = A + 2 H2O. The catalysed reaction is 2 H2O2 = O2 + 2 H2O. In terms of biological role, bifunctional enzyme with both catalase and broad-spectrum peroxidase activity. This is Catalase-peroxidase from Mycobacterium sp. (strain JLS).